Here is a 224-residue protein sequence, read N- to C-terminus: Adenylate kinase (224 aa).

ATP is bound at residue 10–15 (GSGKGT). The NMP stretch occupies residues 30–59 (ESGAIFRDNIKGGTDLGMKAKAYIDKGDLV). AMP-binding positions include serine 31, arginine 36, 57–59 (DLV), 85–88 (GFPR), and glutamine 92. The segment at 126 to 165 (GRRLCENDNNHPNNIFIDAIKPNGDKCRVCGGALSSRADD) is LID. ATP is bound at residue arginine 127. AMP is bound by residues arginine 162 and arginine 174. Asparagine 211 contacts ATP.

This sequence belongs to the adenylate kinase family. As to quaternary structure, monomer.

Its subcellular location is the cytoplasm. It carries out the reaction AMP + ATP = 2 ADP. It functions in the pathway purine metabolism; AMP biosynthesis via salvage pathway; AMP from ADP: step 1/1. Its function is as follows. Catalyzes the reversible transfer of the terminal phosphate group between ATP and AMP. Plays an important role in cellular energy homeostasis and in adenine nucleotide metabolism. In Desulforapulum autotrophicum (strain ATCC 43914 / DSM 3382 / VKM B-1955 / HRM2) (Desulfobacterium autotrophicum), this protein is Adenylate kinase.